We begin with the raw amino-acid sequence, 33 residues long: Actin (33 aa).

This sequence belongs to the actin family.

The protein resides in the cytoplasm. Its subcellular location is the cytoskeleton. It carries out the reaction ATP + H2O = ADP + phosphate + H(+). In terms of biological role, actins are highly conserved proteins that are involved in various types of cell motility and are ubiquitously expressed in all eukaryotic cells. The protein is Actin of Dictyocaulus viviparus (Bovine lungworm).